A 215-amino-acid chain; its full sequence is Cytochrome b6 (215 aa).

Residues Ile32–Phe52 form a helical membrane-spanning segment. Cys35 is a heme c binding site. Heme b contacts are provided by His86 and His100. Transmembrane regions (helical) follow at residues Ala90–Phe110, Leu116–Tyr136, and Leu186–Ile206. His187 and His202 together coordinate heme b.

It belongs to the cytochrome b family. PetB subfamily. In terms of assembly, the 4 large subunits of the cytochrome b6-f complex are cytochrome b6, subunit IV (17 kDa polypeptide, PetD), cytochrome f and the Rieske protein, while the 4 small subunits are PetG, PetL, PetM and PetN. The complex functions as a dimer. Heme b serves as cofactor. It depends on heme c as a cofactor.

Its subcellular location is the plastid. It localises to the chloroplast thylakoid membrane. Component of the cytochrome b6-f complex, which mediates electron transfer between photosystem II (PSII) and photosystem I (PSI), cyclic electron flow around PSI, and state transitions. The chain is Cytochrome b6 from Auxenochlorella protothecoides (Green microalga).